The sequence spans 78 residues: Acyl carrier protein AcpP (78 aa).

The 76-residue stretch at 2-77 (SDIAERVKKI…DAVKFIEKAQ (76 aa)) folds into the Carrier domain. Serine 37 bears the O-(pantetheine 4'-phosphoryl)serine mark.

It belongs to the acyl carrier protein (ACP) family. Post-translationally, 4'-phosphopantetheine is transferred from CoA to a specific serine of apo-ACP by AcpS. This modification is essential for activity because fatty acids are bound in thioester linkage to the sulfhydryl of the prosthetic group.

The protein resides in the cytoplasm. It functions in the pathway lipid metabolism; fatty acid biosynthesis. Carrier of the growing fatty acid chain in fatty acid biosynthesis. This Agrobacterium fabrum (strain C58 / ATCC 33970) (Agrobacterium tumefaciens (strain C58)) protein is Acyl carrier protein AcpP.